The following is a 427-amino-acid chain: 3-isopropylmalate dehydratase large subunit (427 aa).

Cys-308, Cys-368, and Cys-371 together coordinate [4Fe-4S] cluster.

This sequence belongs to the aconitase/IPM isomerase family. LeuC type 2 subfamily. Heterodimer of LeuC and LeuD. Requires [4Fe-4S] cluster as cofactor.

The catalysed reaction is (2R,3S)-3-isopropylmalate = (2S)-2-isopropylmalate. Its pathway is amino-acid biosynthesis; L-leucine biosynthesis; L-leucine from 3-methyl-2-oxobutanoate: step 2/4. Functionally, catalyzes the isomerization between 2-isopropylmalate and 3-isopropylmalate, via the formation of 2-isopropylmaleate. This chain is 3-isopropylmalate dehydratase large subunit, found in Geotalea uraniireducens (strain Rf4) (Geobacter uraniireducens).